Reading from the N-terminus, the 410-residue chain is Neuroserpin (410 aa).

An N-terminal signal peptide occupies residues Met1 to Ala16. N-linked (GlcNAc...) asparagine glycans are attached at residues Asn157 and Asn401.

The protein belongs to the serpin family. In terms of tissue distribution, detected in embryonic ocular vitreous fluid (at protein level). In the embryo present in retina, brain, cerebellum and spinal cord. In adult, predominantly expressed in the brain.

It localises to the secreted. Its subcellular location is the cytoplasmic vesicle. It is found in the secretory vesicle lumen. The protein resides in the perikaryon. Serine protease inhibitor that inhibits plasminogen activators and plasmin but not thrombin. May be involved in the formation or reorganization of synaptic connections as well as for synaptic plasticity in the adult nervous system. May protect neurons from cell damage by tissue-type plasminogen activator. The sequence is that of Neuroserpin (SERPINI1) from Gallus gallus (Chicken).